Here is a 316-residue protein sequence, read N- to C-terminus: tRNA dimethylallyltransferase (316 aa).

17-24 is an ATP binding site; it reads GPTASGKT. A substrate-binding site is contributed by 19-24; it reads TASGKT. 4 interaction with substrate tRNA regions span residues 42–45, 166–170, 247–252, and 280–287; these read DSAL, QRLSR, RCVGYR, and KRQITWLR.

It belongs to the IPP transferase family. In terms of assembly, monomer. Requires Mg(2+) as cofactor.

It catalyses the reaction adenosine(37) in tRNA + dimethylallyl diphosphate = N(6)-dimethylallyladenosine(37) in tRNA + diphosphate. In terms of biological role, catalyzes the transfer of a dimethylallyl group onto the adenine at position 37 in tRNAs that read codons beginning with uridine, leading to the formation of N6-(dimethylallyl)adenosine (i(6)A). The sequence is that of tRNA dimethylallyltransferase from Cronobacter sakazakii (strain ATCC BAA-894) (Enterobacter sakazakii).